Consider the following 205-residue polypeptide: MLTITLSKGRILKQTLPLLEQAGLIIAKQELNSRKLILDTNLTDVKVIIVRSTDVPVFVQHGATDMGIAGKDVLLEHGANNLFEVLDLGIAKCKLMVAAESKNRLKQNTLKVATKYVNSTKRYFQNKGQSCEIIKLYGAMELAPKVGLAHCIVDLVDTGNTLKANGLIPFEYIEKISSRLVVNVASFRTKNAQIKSWIQNIENSL.

Belongs to the ATP phosphoribosyltransferase family. Short subfamily. As to quaternary structure, heteromultimer composed of HisG and HisZ subunits.

It is found in the cytoplasm. It carries out the reaction 1-(5-phospho-beta-D-ribosyl)-ATP + diphosphate = 5-phospho-alpha-D-ribose 1-diphosphate + ATP. Its pathway is amino-acid biosynthesis; L-histidine biosynthesis; L-histidine from 5-phospho-alpha-D-ribose 1-diphosphate: step 1/9. Catalyzes the condensation of ATP and 5-phosphoribose 1-diphosphate to form N'-(5'-phosphoribosyl)-ATP (PR-ATP). Has a crucial role in the pathway because the rate of histidine biosynthesis seems to be controlled primarily by regulation of HisG enzymatic activity. The chain is ATP phosphoribosyltransferase from Vesicomyosocius okutanii subsp. Calyptogena okutanii (strain HA).